Here is a 167-residue protein sequence, read N- to C-terminus: Small ribosomal subunit protein uS5 (167 aa).

The 64-residue stretch at 12–75 (LREKLITINR…ERARGGMRTV (64 aa)) folds into the S5 DRBM domain.

Belongs to the universal ribosomal protein uS5 family. Part of the 30S ribosomal subunit. Contacts proteins S4 and S8.

In terms of biological role, with S4 and S12 plays an important role in translational accuracy. Located at the back of the 30S subunit body where it stabilizes the conformation of the head with respect to the body. The chain is Small ribosomal subunit protein uS5 from Halorhodospira halophila (strain DSM 244 / SL1) (Ectothiorhodospira halophila (strain DSM 244 / SL1)).